We begin with the raw amino-acid sequence, 350 residues long: Galactokinase (350 aa).

Substrate is bound at residue Glu-14–Asp-17. Residues Ser-46 and Gly-96–Ser-102 contribute to the ATP site. The Mg(2+) site is built by Ser-102 and Glu-134. Asp-146 serves as the catalytic Proton acceptor. Residue Tyr-196 coordinates substrate.

It belongs to the GHMP kinase family. GalK subfamily.

Its subcellular location is the cytoplasm. It catalyses the reaction alpha-D-galactose + ATP = alpha-D-galactose 1-phosphate + ADP + H(+). Its pathway is carbohydrate metabolism; galactose metabolism. Its function is as follows. Catalyzes the transfer of the gamma-phosphate of ATP to D-galactose to form alpha-D-galactose-1-phosphate (Gal-1-P). The protein is Galactokinase of Thermotoga petrophila (strain ATCC BAA-488 / DSM 13995 / JCM 10881 / RKU-1).